The sequence spans 485 residues: Cytosol non-specific dipeptidase (485 aa).

His-76 contacts Zn(2+). The active site involves Asp-78. Asp-115 is a Zn(2+) binding site. The active-site Proton acceptor is Glu-145. Positions 146 and 169 each coordinate Zn(2+). Lys-296 carries the post-translational modification N6-acetyllysine. Residue His-457 participates in Zn(2+) binding.

This sequence belongs to the peptidase M20C family. Zn(2+) is required as a cofactor. It depends on Co(2+) as a cofactor.

It catalyses the reaction Hydrolysis of dipeptides, preferentially hydrophobic dipeptides including prolyl amino acids.. Inhibited by metal chelators. Dipeptidase with broad substrate specificity. Requires dipeptide substrates with an unblocked N-terminus and the amino group in the alpha or beta position. Non-protein amino acids and proline are not accepted in the C-terminal position, whereas some dipeptide amides and formyl amino acids are hydrolyzed. Also shows cysteinylglycinase activity, which is sufficient for E.coli to utilize cysteinylglycine as a cysteine source. This chain is Cytosol non-specific dipeptidase (pepD), found in Escherichia coli (strain K12).